A 185-amino-acid chain; its full sequence is 4-nitrophenol 4-monooxygenase/4-nitrocatechol 2-monooxygenase, reductase component (185 aa).

This sequence belongs to the non-flavoprotein flavin reductase family. As to quaternary structure, the 4-NP/4-NCA monooxygenase is composed of an oxygenase component NpcA and a reductase component NpcB.

The catalysed reaction is 4-nitrophenol + NADH + O2 + H(+) = 4-nitrocatechol + NAD(+) + H2O. It catalyses the reaction 4-nitrocatechol + NADPH + O2 = 2-hydroxy-1,4-benzoquinone + nitrite + NADP(+) + H2O. The enzyme catalyses 4-nitrocatechol + NADH + O2 = 2-hydroxy-1,4-benzoquinone + nitrite + NAD(+) + H2O. The protein operates within aromatic compound metabolism. It participates in xenobiotic degradation. Inhibited by methimazole. Its function is as follows. Involved in the degradation of para-nitrophenol (4-NP). Catalyzes both the initial hydroxylation of 4-NP to produce 4-nitrocatechol (4-NCA) and the subsequent oxidative release of the nitro group from 4-NCA to produce 2-hydroxy-1,4-benzoquinone. It can also use 4-nitroresorcinol as substrate with a rate of nitrite release similar to that observed with the two physiological substrates, 4-PN and 4-NCA. This chain is 4-nitrophenol 4-monooxygenase/4-nitrocatechol 2-monooxygenase, reductase component (npcB), found in Rhodococcus opacus (Nocardia opaca).